Reading from the N-terminus, the 107-residue chain is UPF0145 protein PM1668 (107 aa).

The protein belongs to the UPF0145 family.

The chain is UPF0145 protein PM1668 from Pasteurella multocida (strain Pm70).